The following is a 336-amino-acid chain: MAEGGTGPDGRAGPGPAGPNLKEWLREQFCDHPLEHCDDTRLHDAAYVGDLQTLRNLLQEESYRSRINEKSVWCCGWLPCTPLRIAATAGHGNCVDFLIRKGAEVDLVDVKGQTALYVAVVNGHLESTEILLEAGADPNGSRHHRSTPVYHASRVGRDDILKALIRYGADVDVNHHLTPDTRPPFSRRLTSLVVCPLYISAAYHNLQCFRLLLQAGANPDFNCNGPVNTQEFYRGSPGCVMDAVLRHGCEAAFVSLLVEFGANLNLVKWESLGPEARGRRKMDPEALQVFKEARSIPRTLLSLCRVAVRRALGKYRLHLVPSLPLPDPIKKFLLYE.

ANK repeat units follow at residues 37–69 (CDDTRLHDAAYVGDLQTLRNLLQEESYRSRINE), 78–107 (LPCTPLRIAATAGHGNCVDFLIRKGAEVDL), 111–140 (KGQTALYVAVVNGHLESTEILLEAGADPNG), 144–173 (HRSTPVYHASRVGRDDILKALIRYGADVDV), 192–221 (LVVCPLYISAAYHNLQCFRLLLQAGANPDF), and 236–266 (SPGCVMDAVLRHGCEAAFVSLLVEFGANLNL). An SOCS box domain is found at 287–336 (LQVFKEARSIPRTLLSLCRVAVRRALGKYRLHLVPSLPLPDPIKKFLLYE).

The protein belongs to the ankyrin SOCS box (ASB) family. As to quaternary structure, interacts with CUL5 and RNF7. In terms of tissue distribution, highest expression in testis, spleen, bone marrow and salivary gland.

Its pathway is protein modification; protein ubiquitination. Probable substrate-recognition component of a SCF-like ECS (Elongin-Cullin-SOCS-box protein) E3 ligase complex which mediates the ubiquitination and subsequent proteasomal degradation of target proteins. Mediates Notch-induced ubiquitination and degradation of TCF3/E2A and JAK2. May play a role in testis development. This is Ankyrin repeat and SOCS box protein 1 (Asb1) from Mus musculus (Mouse).